Reading from the N-terminus, the 320-residue chain is Cytochrome f (320 aa).

Residues 1–35 (MQTRNTFSWIREEITRSISVSLMIYIITWASISSA) form the signal peptide. The heme site is built by Y36, C56, C59, and H60. A helical transmembrane segment spans residues 286–306 (VQGLLFFLGSVVLAQIFLVLK).

Belongs to the cytochrome f family. The 4 large subunits of the cytochrome b6-f complex are cytochrome b6, subunit IV (17 kDa polypeptide, petD), cytochrome f and the Rieske protein, while the 4 small subunits are PetG, PetL, PetM and PetN. The complex functions as a dimer. It depends on heme as a cofactor.

The protein resides in the plastid. The protein localises to the chloroplast thylakoid membrane. Its function is as follows. Component of the cytochrome b6-f complex, which mediates electron transfer between photosystem II (PSII) and photosystem I (PSI), cyclic electron flow around PSI, and state transitions. In Crucihimalaya wallichii (Rock-cress), this protein is Cytochrome f.